Consider the following 215-residue polypeptide: Methylosome subunit pICln (215 aa).

Disordered stretches follow at residues 88-120 and 160-215; these read GDPPQQAVNGRNGGGSEAEVDEGNGSDEHDEDD and HPDS…DADE. 3 stretches are compositionally biased toward acidic residues: residues 105–120, 167–190, and 203–215; these read AEVDEGNGSDEHDEDD, DSEDSDPMQDAGGLEDEAMEEDDA, and LDDDEERFEDADE.

The protein belongs to the pICln (TC 1.A.47) family. Component of the methylosome, a 20S complex containing at least CLNS1A/pICln, PRMT5/SKB1 and WDR77/MEP50; may mediate SNRPD1 and SNRPD3 methylation. Forms a 6S pICln-Sm complex composed of CLNS1A/pICln, SNRPD1, SNRPD2, SNRPE, SNRPF and SNRPG; ring-like structure where CLNS1A/pICln mimics additional Sm proteins and which is unable to assemble into the core snRNP.

The protein resides in the cytoplasm. Its subcellular location is the cytosol. It localises to the nucleus. It is found in the cytoskeleton. Functionally, involved in both the assembly of spliceosomal snRNPs and the methylation of Sm proteins. Chaperone that regulates the assembly of spliceosomal U1, U2, U4 and U5 small nuclear ribonucleoproteins (snRNPs), the building blocks of the spliceosome, and thereby plays an important role in the splicing of cellular pre-mRNAs. Most spliceosomal snRNPs contain a common set of Sm proteins SNRPB, SNRPD1, SNRPD2, SNRPD3, SNRPE, SNRPF and SNRPG that assemble in a heptameric protein ring on the Sm site of the small nuclear RNA to form the core snRNP (Sm core). In the cytosol, the Sm proteins SNRPD1, SNRPD2, SNRPE, SNRPF and SNRPG are trapped in an inactive 6S pICln-Sm complex by the chaperone CLNS1A that controls the assembly of the core snRNP. Dissociation by the SMN complex of CLNS1A from the trapped Sm proteins and their transfer to an SMN-Sm complex triggers the assembly of core snRNPs and their transport to the nucleus. The protein is Methylosome subunit pICln (icln) of Drosophila melanogaster (Fruit fly).